An 87-amino-acid polypeptide reads, in one-letter code: Guanine nucleotide-binding protein subunit gamma (87 aa).

C84 is subject to Cysteine methyl ester. A lipid anchor (S-geranylgeranyl cysteine) is attached at C84. The propeptide at 85-87 (LLV) is removed in mature form.

This sequence belongs to the G protein gamma family. In terms of assembly, g proteins are composed of 3 units, alpha, beta and gamma. Post-translationally, the N-terminus is blocked.

Its subcellular location is the cell membrane. Its function is as follows. Guanine nucleotide-binding proteins (G proteins) are involved as a modulator or transducer in various transmembrane signaling systems. This major G-protein of the squid photoreceptor is involved in visual transduction. The beta and gamma chains are required for the GTPase activity, for replacement of GDP by GTP, and for G protein-effector interaction. The protein is Guanine nucleotide-binding protein subunit gamma of Loligo forbesii (Veined squid).